A 405-amino-acid chain; its full sequence is Amino sugar nitrososynthase DnmZ (405 aa).

DTDP contacts are provided by E117 and R332.

It belongs to the acyl-CoA dehydrogenase family. In terms of assembly, homotetramer. FAD is required as a cofactor.

Its pathway is antibiotic biosynthesis. Nitrososynthase involved in the biosynthesis of baumycin. Catalyzes the double-oxidation of TDP-L-epi-vancosamine to TDP-L-epi-vancosonitrose. The rapid turnover of TDP-L-epi-vancosamine suggests that this compound, or a closely related analog, is the natural substrate for DnmZ. Can also catalyze the double-oxidation of TDP-L-evernosamine to TDP-L-evernitrosose. In Streptomyces peucetius, this protein is Amino sugar nitrososynthase DnmZ.